Reading from the N-terminus, the 410-residue chain is uncharacterized protein (410 aa).

Residue His87 participates in Zn(2+) binding. Asp89 is a catalytic residue. Asp120 contributes to the Zn(2+) binding site. The Proton acceptor role is filled by Glu154. Positions 155, 184, and 387 each coordinate Zn(2+).

Belongs to the peptidase M20A family. Zn(2+) is required as a cofactor. Requires Co(2+) as cofactor.

This is an uncharacterized protein from Methanocaldococcus jannaschii (strain ATCC 43067 / DSM 2661 / JAL-1 / JCM 10045 / NBRC 100440) (Methanococcus jannaschii).